The chain runs to 494 residues: UPF0371 protein stu1377 (494 aa).

Belongs to the UPF0371 family.

This is UPF0371 protein stu1377 from Streptococcus thermophilus (strain ATCC BAA-250 / LMG 18311).